Reading from the N-terminus, the 408-residue chain is Putative transporter AmpG 2 (408 aa).

Helical transmembrane passes span 11-31, 49-69, 84-104, 110-130, 154-174, 177-197, 224-244, 261-281, 294-311, 315-337, 353-373, and 382-402; these read IFNILFILIISFPGGLIYLLT, IGLFGLVNFIYILKFLWGPLL, YCLVITLINCIVCVYVLTSFN, TPFVLCLIVLAFFSSIYDMLI, FRIGILISGSGALYLSTIISW, VYRTMAILCIPSLLLIIFYPL, WIVIISFMLLYRLQDSFLSIM, IGYKAFGMCAAIFGGVIGGFL, VLIYHALSSLSFIYLYFL, IISLYIAVFCQEFTKGLTMSPFF, IALITSITNVGTILIGSISGY, and YFFIVAGLCFIPAYILILYLP.

It belongs to the major facilitator superfamily.

Its subcellular location is the cell inner membrane. This Rickettsia typhi (strain ATCC VR-144 / Wilmington) protein is Putative transporter AmpG 2 (ampG2).